The primary structure comprises 362 residues: [LysW]-lysine hydrolase (362 aa).

A Zn(2+)-binding site is contributed by H69. Residue D71 is part of the active site. Position 94 (D94) interacts with Zn(2+). Residue E127 is the Proton acceptor of the active site. Zn(2+) is bound by residues E128, E151, and H334.

This sequence belongs to the peptidase M20A family. LysK subfamily. Requires Zn(2+) as cofactor. It depends on Co(2+) as a cofactor.

The protein localises to the cytoplasm. It catalyses the reaction [amino-group carrier protein]-C-terminal-gamma-(L-lysyl)-L-glutamate + H2O = [amino-group carrier protein]-C-terminal-L-glutamate + L-lysine. Its pathway is amino-acid biosynthesis; L-lysine biosynthesis via AAA pathway; L-lysine from L-alpha-aminoadipate (Thermus route): step 5/5. Catalyzes the release of L-lysine from [LysW]-gamma-L-lysine. The sequence is that of [LysW]-lysine hydrolase from Deinococcus radiodurans (strain ATCC 13939 / DSM 20539 / JCM 16871 / CCUG 27074 / LMG 4051 / NBRC 15346 / NCIMB 9279 / VKM B-1422 / R1).